The primary structure comprises 522 residues: GMP synthase [glutamine-hydrolyzing] (522 aa).

The region spanning 9–204 (KILILDFGAQ…VVDICGCQTL (196 aa)) is the Glutamine amidotransferase type-1 domain. Residue Cys86 is the Nucleophile of the active site. Residues His178 and Glu180 contribute to the active site. In terms of domain architecture, GMPS ATP-PPase spans 205–397 (WTAANIIEDQ…LGLPHAMVYR (193 aa)). An ATP-binding site is contributed by 232-238 (SGGVDSS).

Homodimer.

It catalyses the reaction XMP + L-glutamine + ATP + H2O = GMP + L-glutamate + AMP + diphosphate + 2 H(+). Its pathway is purine metabolism; GMP biosynthesis; GMP from XMP (L-Gln route): step 1/1. Its function is as follows. Catalyzes the synthesis of GMP from XMP. This is GMP synthase [glutamine-hydrolyzing] from Xylella fastidiosa (strain M12).